A 105-amino-acid polypeptide reads, in one-letter code: MSAAAVFRGLRPSPELLLLGLLLLPAVVAVTRASPEESDGDLSCVCVKTSSSRIHLKRITSLEVIKAGPHCAVPQLIATLKNGSKICLDRQVPLYKKIIKKLLES.

Positions 1-29 are cleaved as a signal peptide; that stretch reads MSAAAVFRGLRPSPELLLLGLLLLPAVVA. Thr-31 is a glycosylation site (O-linked (GalNAc...) threonine; partial). 2 disulfides stabilise this stretch: Cys-44–Cys-71 and Cys-46–Cys-87. At Ser-61 the chain carries Phosphoserine. 96 to 102 is a binding site for heparin; that stretch reads KKIIKKL.

The protein belongs to the intercrine alpha (chemokine CxC) family. As to quaternary structure, homotetramer. Interacts with TNFAIP6 (via Link domain). Interacts with CCR1. Interacts with CXCR3. Interacts with THBD; this interaction enhances generation of activated protein C. In terms of processing, O-linked glycan consists of Gal-GalNAc disaccharide which is modified with sialic acid residues (microheterogeneity).

Its subcellular location is the secreted. Its function is as follows. Chemokine released during platelet aggregation that plays a role in different biological processes including hematopoiesis, cell proliferation, differentiation, and activation. Acts via different functional receptors including CCR1, CXCR3A or CXCR3B. Upon interaction with CXCR3A receptor, induces activated T-lymphocytes migration mediated via downstream Ras/extracellular signal-regulated kinase (ERK) signaling. Neutralizes the anticoagulant effect of heparin by binding more strongly to heparin than to the chondroitin-4-sulfate chains of the carrier molecule. Plays a role in the inhibition of hematopoiesis and in the maintenance of hematopoietic stem cell (HSC) quiescence. Chemotactic for neutrophils and monocytes via CCR1. Inhibits endothelial cell proliferation. In cooperation with toll-like receptor 8/TLR8, induces chromatin remodeling and activates inflammatory gene expression via the TBK1-IRF5 axis. In addition, induces myofibroblast differentiation and collagen synthesis in different precursor cells, including endothelial cells, by stimulating endothelial-to-mesenchymal transition. Interacts with thrombomodulin/THBD to enhance the activation of protein C and thus potentiates its anticoagulant activity. This chain is Platelet factor 4 (Pf4), found in Rattus norvegicus (Rat).